Reading from the N-terminus, the 415-residue chain is UDP-N-acetylmuramoylalanine--D-glutamate ligase (415 aa).

91–97 contributes to the ATP binding site; sequence GTDGKST.

This sequence belongs to the MurCDEF family.

Its subcellular location is the cytoplasm. The catalysed reaction is UDP-N-acetyl-alpha-D-muramoyl-L-alanine + D-glutamate + ATP = UDP-N-acetyl-alpha-D-muramoyl-L-alanyl-D-glutamate + ADP + phosphate + H(+). The protein operates within cell wall biogenesis; peptidoglycan biosynthesis. Its function is as follows. Cell wall formation. Catalyzes the addition of glutamate to the nucleotide precursor UDP-N-acetylmuramoyl-L-alanine (UMA). This chain is UDP-N-acetylmuramoylalanine--D-glutamate ligase, found in Aquifex aeolicus (strain VF5).